Here is a 136-residue protein sequence, read N- to C-terminus: Large ribosomal subunit protein uL16 (136 aa).

This sequence belongs to the universal ribosomal protein uL16 family. As to quaternary structure, part of the 50S ribosomal subunit.

Its function is as follows. Binds 23S rRNA and is also seen to make contacts with the A and possibly P site tRNAs. The chain is Large ribosomal subunit protein uL16 from Shigella flexneri.